Consider the following 241-residue polypeptide: Tryptophan synthase alpha chain (241 aa).

Residues E31 and D42 each act as proton acceptor in the active site.

This sequence belongs to the TrpA family. In terms of assembly, tetramer of two alpha and two beta chains.

The catalysed reaction is (1S,2R)-1-C-(indol-3-yl)glycerol 3-phosphate + L-serine = D-glyceraldehyde 3-phosphate + L-tryptophan + H2O. The protein operates within amino-acid biosynthesis; L-tryptophan biosynthesis; L-tryptophan from chorismate: step 5/5. Its function is as follows. The alpha subunit is responsible for the aldol cleavage of indoleglycerol phosphate to indole and glyceraldehyde 3-phosphate. The polypeptide is Tryptophan synthase alpha chain (Staphylococcus saprophyticus subsp. saprophyticus (strain ATCC 15305 / DSM 20229 / NCIMB 8711 / NCTC 7292 / S-41)).